The following is a 371-amino-acid chain: Glycerate kinase (371 aa).

This sequence belongs to the glycerate kinase type-1 family.

It catalyses the reaction (R)-glycerate + ATP = (2R)-3-phosphoglycerate + ADP + H(+). The sequence is that of Glycerate kinase (glxK) from Neisseria meningitidis serogroup B (strain ATCC BAA-335 / MC58).